Reading from the N-terminus, the 593-residue chain is Mitosis inducer protein kinase cdr1 (593 aa).

Residues 12–258 (WRLGKTLGTG…IPEVFSHPFL (247 aa)) form the Protein kinase domain. ATP contacts are provided by residues 18–26 (LGTGSTSCV) and Lys-41. Asp-128 (proton acceptor) is an active-site residue. Ser-550 is modified (phosphoserine).

Belongs to the protein kinase superfamily. CAMK Ser/Thr protein kinase family. NIM1 subfamily. Interacts with msp1.

The catalysed reaction is L-seryl-[protein] + ATP = O-phospho-L-seryl-[protein] + ADP + H(+). It carries out the reaction L-threonyl-[protein] + ATP = O-phospho-L-threonyl-[protein] + ADP + H(+). Its function is as follows. This protein, a dose-dependent mitotic inducer, appears to function as a negative regulator of mitosis inhibitor wee1 by phosphorylating and inactivating it. The sequence is that of Mitosis inducer protein kinase cdr1 (cdr1) from Schizosaccharomyces pombe (strain 972 / ATCC 24843) (Fission yeast).